The primary structure comprises 416 residues: Calreticulin (416 aa).

Residues 1–17 form the signal peptide; sequence MLLSVPLLLGLLGLAAA. An N-domain region spans residues 18-197; it reads DPAIYFKEQF…NSQVESGSLE (180 aa). Residue Q26 participates in Ca(2+) binding. At K48 the chain carries N6-acetyllysine. Ca(2+)-binding residues include K62 and K64. The residue at position 64 (K64) is an N6-(2-hydroxyisobutyryl)lysine. Cysteines 105 and 137 form a disulfide. The an alpha-D-glucoside site is built by Y109, K111, Y128, and D135. An N6-acetyllysine modification is found at K159. Residues 191–202 form a 1-1 repeat; the sequence is VESGSLEDDWDF. Residues 191 to 255 are 4 X approximate repeats; it reads VESGSLEDDW…DAKKPEDWDE (65 aa). Residues 193–277 form a disordered region; sequence SGSLEDDWDF…NPEYKGEWKP (85 aa). The tract at residues 198–308 is P-domain; it reads DDWDFLPPKK…YSPDANIYAY (111 aa). Positions 207–251 are enriched in basic and acidic residues; sequence KIKDPDAAKPEDWDERAKIDDPTDSKPEDWDKPEHIPDPDAKKPE. Residue K209 is modified to N6-acetyllysine. 6 repeat units span residues 210-221, 227-238, 244-255, 259-269, 273-283, and 287-297. Positions 237-270 are interaction with PPIB; it reads DKPEHIPDPDAKKPEDWDEEMDGEWEPPVIQNPE. Positions 252 to 261 are enriched in acidic residues; it reads DWDEEMDGEW. The interval 259–297 is 3 X approximate repeats; the sequence is GEWEPPVIQNPEYKGEWKPRQIDNPDYKGTWIHPEIDNP. The tract at residues 309–416 is C-domain; sequence DSFAVLGLDL…DATGQAKDEL (108 aa). D317 provides a ligand contact to an alpha-D-glucoside. D328 provides a ligand contact to Ca(2+). The tract at residues 350 to 416 is disordered; that stretch reads TKAAEKQMKD…DATGQAKDEL (67 aa). Residues 352–379 are compositionally biased toward basic and acidic residues; the sequence is AAEKQMKDKQDEEQRLKEEEEDKKRKEE. Over residues 380–408 the composition is skewed to acidic residues; the sequence is EEAEDKEDEDDRDEDEDEEDEKEEDEEDA. The Prevents secretion from ER motif lies at 413–416; the sequence is KDEL.

This sequence belongs to the calreticulin family. Monomer. Component of an EIF2 complex at least composed of CELF1/CUGBP1, CALR, CALR3, EIF2S1, EIF2S2, HSP90B1 and HSPA5. Interacts with GABARAP, NR3C1 and TRIM21. Interacts with PPIB and SPACA9. Interacts (via P-domain) with PDIA5. Interacts with PDIA3/ERp57. Interacts with CLCC1. In terms of tissue distribution, predentin and odontoblast.

It is found in the endoplasmic reticulum lumen. It localises to the cytoplasm. Its subcellular location is the cytosol. The protein localises to the secreted. The protein resides in the extracellular space. It is found in the extracellular matrix. It localises to the cell surface. Its subcellular location is the sarcoplasmic reticulum lumen. The protein localises to the cytoplasmic vesicle. The protein resides in the secretory vesicle. It is found in the cortical granule. It localises to the cytolytic granule. Functionally, calcium-binding chaperone that promotes folding, oligomeric assembly and quality control in the endoplasmic reticulum (ER) via the calreticulin/calnexin cycle. This lectin interacts transiently with almost all of the monoglucosylated glycoproteins that are synthesized in the ER. Interacts with the DNA-binding domain of NR3C1 and mediates its nuclear export. Involved in maternal gene expression regulation. May participate in oocyte maturation via the regulation of calcium homeostasis. Present in the cortical granules of non-activated oocytes, is exocytosed during the cortical reaction in response to oocyte activation and might participate in the block to polyspermy. The chain is Calreticulin (Calr) from Rattus norvegicus (Rat).